We begin with the raw amino-acid sequence, 600 residues long: DNA primase (600 aa).

Residues 38 to 62 (CPFHDEKTPSFIVYPTRGHYHCYGC) form a CHC2-type zinc finger. Positions 253–333 (KRVILVEGQA…GIAVIVCRLP (81 aa)) constitute a Toprim domain. 3 residues coordinate Mg(2+): Glu-259, Asp-304, and Asp-306.

This sequence belongs to the DnaG primase family. As to quaternary structure, monomer. Interacts with DnaB. Zn(2+) is required as a cofactor. It depends on Mg(2+) as a cofactor.

It catalyses the reaction ssDNA + n NTP = ssDNA/pppN(pN)n-1 hybrid + (n-1) diphosphate.. In terms of biological role, RNA polymerase that catalyzes the synthesis of short RNA molecules used as primers for DNA polymerase during DNA replication. The protein is DNA primase of Chlamydia muridarum (strain MoPn / Nigg).